Here is a 431-residue protein sequence, read N- to C-terminus: Adenylosuccinate lyase (431 aa).

N(6)-(1,2-dicarboxyethyl)-AMP-binding positions include 4–5 (RY), 67–69 (RHD), and 93–94 (TS). The active-site Proton donor/acceptor is histidine 141. Glutamine 212 serves as a coordination point for N(6)-(1,2-dicarboxyethyl)-AMP. Serine 262 functions as the Proton donor/acceptor in the catalytic mechanism. Residues serine 263, 268–270 (KRN), asparagine 276, and 307–311 (SAERI) each bind N(6)-(1,2-dicarboxyethyl)-AMP.

Belongs to the lyase 1 family. Adenylosuccinate lyase subfamily. In terms of assembly, homodimer and homotetramer. Residues from neighboring subunits contribute catalytic and substrate-binding residues to each active site.

It carries out the reaction N(6)-(1,2-dicarboxyethyl)-AMP = fumarate + AMP. It catalyses the reaction (2S)-2-[5-amino-1-(5-phospho-beta-D-ribosyl)imidazole-4-carboxamido]succinate = 5-amino-1-(5-phospho-beta-D-ribosyl)imidazole-4-carboxamide + fumarate. It functions in the pathway purine metabolism; AMP biosynthesis via de novo pathway; AMP from IMP: step 2/2. It participates in purine metabolism; IMP biosynthesis via de novo pathway; 5-amino-1-(5-phospho-D-ribosyl)imidazole-4-carboxamide from 5-amino-1-(5-phospho-D-ribosyl)imidazole-4-carboxylate: step 2/2. Its function is as follows. Catalyzes two reactions in de novo purine nucleotide biosynthesis. Catalyzes the breakdown of 5-aminoimidazole- (N-succinylocarboxamide) ribotide (SAICAR or 2-[5-amino-1-(5-phospho-beta-D-ribosyl)imidazole-4-carboxamido]succinate) to 5-aminoimidazole-4-carboxamide ribotide (AICAR or 5-amino-1-(5-phospho-beta-D-ribosyl)imidazole-4-carboxamide) and fumarate, and of adenylosuccinate (ADS or N(6)-(1,2-dicarboxyethyl)-AMP) to adenosine monophosphate (AMP) and fumarate. This is Adenylosuccinate lyase (purB) from Staphylococcus haemolyticus (strain JCSC1435).